An 884-amino-acid polypeptide reads, in one-letter code: Androgen receptor (884 aa).

The tract at residues 1–522 is modulating; it reads MEVQLGLGRV…PIDYYFPPQK (522 aa). The interval 1–551 is interaction with ZNF318; sequence MEVQLGLGRV…GSCKVFFKRA (551 aa). Disordered regions lie at residues 33-145 and 174-207; these read VIQN…TLSL and QQQQ…YLGG. Low complexity-rich tracts occupy residues 55–79 and 174–196; these read QQQQ…PQAQ and QQQQ…AAGA. Ser-61 is modified (phosphoserine; by CDK9). Ser-75 bears the Phosphoserine mark. Positions 197–207 are enriched in polar residues; the sequence is PTSSKDSYLGG. Position 204 is a phosphotyrosine; by CSK (Tyr-204). Residue Ser-237 is modified to Phosphoserine. Tyr-248 is subject to Phosphotyrosine; by CSK and TNK2. The interval 275–294 is disordered; that stretch reads DDSADKGTEEPAEYTPFKGS. A phosphotyrosine; by CSK mark is found at Tyr-288, Tyr-327, Tyr-338, and Tyr-343. Tyr-344 is subject to Phosphotyrosine; by CSK and TNK2. Lys-367 is covalently cross-linked (Glycyl lysine isopeptide (Lys-Gly) (interchain with G-Cter in SUMO)). At Tyr-374 the chain carries Phosphotyrosine; by CSK. Residue Lys-485 forms a Glycyl lysine isopeptide (Lys-Gly) (interchain with G-Cter in SUMO) linkage. Phosphotyrosine; by CSK is present on residues Tyr-499 and Tyr-516. The interval 516-883 is interaction with LPXN; it reads YYFPPQKTCL…GKVKPIYFHT (368 aa). Residues 523 to 596 constitute a DNA-binding region (nuclear receptor); the sequence is TCLICGDEAS…AGMTLGARKL (74 aa). 2 NR C4-type zinc fingers span residues 524–544 and 560–584; these read CLIC…CGSC and CASR…LRKC. Positions 536 to 626 are interaction with HIPK3; that stretch reads YGALTCGSCK…TEESSQKLTV (91 aa). The tract at residues 556–883 is interaction with CCAR1; it reads QKYLCASRND…GKVKPIYFHT (328 aa). The tract at residues 589–883 is interaction with KAT7; sequence MTLGARKLKK…GKVKPIYFHT (295 aa). Ser-615 is subject to Phosphoserine; by STK4/MST1. The 232-residue stretch at 633–864 folds into the NR LBD domain; the sequence is ECQPIFLNVL…DFPEMMAEII (232 aa). Positions 670 and 717 each coordinate 17beta-hydroxy-5alpha-androstan-3-one. Residues Lys-810 and Lys-812 each participate in a glycyl lysine isopeptide (Lys-Gly) (interchain with G-Cter in ubiquitin) cross-link. Thr-842 provides a ligand contact to 17beta-hydroxy-5alpha-androstan-3-one. Tyr-880 bears the Phosphotyrosine; by CSK mark.

It belongs to the nuclear hormone receptor family. NR3 subfamily. Binds DNA as a homodimer. Part of a ternary complex containing AR, EFCAB6/DJBP and PARK7. Interacts with HIPK3 and NR0B2 in the presence of androgen. The ligand binding domain interacts with KAT7/HBO1 in the presence of dihydrotestosterone. Interacts with EFCAB6/DJBP, PQBP1, RANBP9, RBAK, SPDEF, SRA1, TGFB1I1 and RREB1. Interacts with ZMIZ1/ZIMP10 and ZMIZ2/ZMIP7 which both enhance its transactivation activity. Interacts with SLC30A9 and RAD54L2/ARIP4. Interacts with MACROD1 (via macro domain). Interacts via the ligand-binding domain with LXXLL and FXXLF motifs from NCOA1, NCOA2, NCOA3 and MAGEA11. Interacts (via nuclear receptor DNA binding domain and nuclear receptor ligand binding domain) with NCOA4. The AR N-terminal poly-Gln region binds Ran resulting in enhancement of AR-mediated transactivation. Ran-binding decreases as the poly-Gln length increases. Interacts with HIP1 (via coiled coil domain). Interacts (via ligand-binding domain) with TRIM68. Interacts with TNK2. Interacts with USP26. Interacts with RNF6. Interacts (regulated by RNF6 probably through polyubiquitination) with RNF14; regulates AR transcriptional activity. Interacts with PRMT2 and TRIM24. Interacts with RACK1. Interacts with RANBP10; this interaction enhances dihydrotestosterone-induced AR transcriptional activity. Interacts with PRPF6 in a hormone-independent way; this interaction enhances dihydrotestosterone-induced AR transcriptional activity. Interacts with STK4/MST1. Interacts with ZIPK/DAPK3. Interacts with LPXN. Interacts with MAK. Part of a complex containing AR, MAK and NCOA3. Interacts with CRY1. Interacts with CCAR1 and GATA2. Interacts with ZNF318. Interacts with BUD31. Interacts with ARID4A. Interacts with ARID4B. Interacts (via NR LBD domain) with ZBTB7A; the interaction is direct and androgen-dependent. Interacts with NCOR1. Interacts with NCOR2. Interacts with CRY2 in a ligand-dependent manner. In terms of processing, phosphorylated in prostate cancer cells in response to several growth factors including EGF. Phosphorylation is induced by c-Src kinase (CSK). Tyr-499 is one of the major phosphorylation sites and an increase in phosphorylation and Src kinase activity is associated with prostate cancer progression. Phosphorylation by TNK2 enhances the DNA-binding and transcriptional activity. Phosphorylation at Ser-61 by CDK9 regulates AR promoter selectivity and cell growth. Sumoylated on Lys-367 (major) and Lys-485. Ubiquitinated. Deubiquitinated by USP26. 'Lys-6' and 'Lys-27'-linked polyubiquitination by RNF6 modulates AR transcriptional activity and specificity. Post-translationally, palmitoylated by ZDHHC7 and ZDHHC21. Palmitoylation is required for plasma membrane targeting and for rapid intracellular signaling via ERK and AKT kinases and cAMP generation.

The protein resides in the nucleus. It localises to the cytoplasm. Its function is as follows. Steroid hormone receptors are ligand-activated transcription factors that regulate eukaryotic gene expression and affect cellular proliferation and differentiation in target tissues. Transcription factor activity is modulated by bound coactivator and corepressor proteins like ZBTB7A that recruits NCOR1 and NCOR2 to the androgen response elements/ARE on target genes, negatively regulating androgen receptor signaling and androgen-induced cell proliferation. Transcription activation is also down-regulated by NR0B2. Activated, but not phosphorylated, by HIPK3 and ZIPK/DAPK3. The chain is Androgen receptor (AR) from Eulemur fulvus collaris (Collared brown lemur).